A 127-amino-acid chain; its full sequence is Glycine cleavage system H protein (127 aa).

The Lipoyl-binding domain occupies 24–105; the sequence is TALVGITDFA…YGSGWMVKMK (82 aa). The residue at position 65 (lysine 65) is an N6-lipoyllysine.

It belongs to the GcvH family. In terms of assembly, the glycine cleavage system is composed of four proteins: P, T, L and H. Requires (R)-lipoate as cofactor.

Functionally, the glycine cleavage system catalyzes the degradation of glycine. The H protein shuttles the methylamine group of glycine from the P protein to the T protein. This Chlorobium luteolum (strain DSM 273 / BCRC 81028 / 2530) (Pelodictyon luteolum) protein is Glycine cleavage system H protein.